We begin with the raw amino-acid sequence, 276 residues long: Rhomboid protease GlpG (276 aa).

A run of 6 helical transmembrane segments spans residues 94 to 114, 142 to 162, 168 to 188, 193 to 213, 229 to 249, and 250 to 270; these read AGPL…LMQI, ALLH…WYLG, VLGT…SGWA, SGTY…YVWL, LMAF…GMSI, and ANAA…WDTY. Catalysis depends on S201, which acts as the Nucleophile. H254 is a catalytic residue.

This sequence belongs to the peptidase S54 family.

The protein localises to the cell inner membrane. The catalysed reaction is Cleaves type-1 transmembrane domains using a catalytic dyad composed of serine and histidine that are contributed by different transmembrane domains.. In terms of biological role, rhomboid-type serine protease that catalyzes intramembrane proteolysis. The chain is Rhomboid protease GlpG from Pectobacterium atrosepticum (strain SCRI 1043 / ATCC BAA-672) (Erwinia carotovora subsp. atroseptica).